The following is a 421-amino-acid chain: UDP-N-acetylglucosamine 1-carboxyvinyltransferase (421 aa).

Residue 22 to 23 (KN) coordinates phosphoenolpyruvate. Arg92 provides a ligand contact to UDP-N-acetyl-alpha-D-glucosamine. The active-site Proton donor is Cys116. Cys116 is subject to 2-(S-cysteinyl)pyruvic acid O-phosphothioketal. Residues 121 to 125 (RPVDQ), Asp308, and Ile330 each bind UDP-N-acetyl-alpha-D-glucosamine.

This sequence belongs to the EPSP synthase family. MurA subfamily.

Its subcellular location is the cytoplasm. The catalysed reaction is phosphoenolpyruvate + UDP-N-acetyl-alpha-D-glucosamine = UDP-N-acetyl-3-O-(1-carboxyvinyl)-alpha-D-glucosamine + phosphate. It participates in cell wall biogenesis; peptidoglycan biosynthesis. Its function is as follows. Cell wall formation. Adds enolpyruvyl to UDP-N-acetylglucosamine. The sequence is that of UDP-N-acetylglucosamine 1-carboxyvinyltransferase from Ralstonia nicotianae (strain ATCC BAA-1114 / GMI1000) (Ralstonia solanacearum).